Reading from the N-terminus, the 206-residue chain is Small ribosomal subunit protein uS4 (206 aa).

The 61-residue stretch at 96–156 (SRLDNIVYRL…KKSKNQLRIK (61 aa)) folds into the S4 RNA-binding domain.

The protein belongs to the universal ribosomal protein uS4 family. Part of the 30S ribosomal subunit. Contacts protein S5. The interaction surface between S4 and S5 is involved in control of translational fidelity.

Functionally, one of the primary rRNA binding proteins, it binds directly to 16S rRNA where it nucleates assembly of the body of the 30S subunit. Its function is as follows. With S5 and S12 plays an important role in translational accuracy. This is Small ribosomal subunit protein uS4 from Buchnera aphidicola subsp. Cinara cedri (strain Cc).